Here is a 105-residue protein sequence, read N- to C-terminus: Met repressor (105 aa).

Belongs to the MetJ family. As to quaternary structure, homodimer.

The protein localises to the cytoplasm. This regulatory protein, when combined with SAM (S-adenosylmethionine) represses the expression of the methionine regulon and of enzymes involved in SAM synthesis. The protein is Met repressor of Erwinia tasmaniensis (strain DSM 17950 / CFBP 7177 / CIP 109463 / NCPPB 4357 / Et1/99).